The following is a 341-amino-acid chain: Anthranilate phosphoribosyltransferase (341 aa).

5-phospho-alpha-D-ribose 1-diphosphate contacts are provided by residues Gly-79, 82-83 (GD), Thr-87, 89-92 (NIST), 107-115 (KHGNRAVSS), and Ser-119. Gly-79 contacts anthranilate. Ser-91 lines the Mg(2+) pocket. Asn-110 is a binding site for anthranilate. Arg-165 serves as a coordination point for anthranilate. Asp-224 and Glu-225 together coordinate Mg(2+).

The protein belongs to the anthranilate phosphoribosyltransferase family. Homodimer. The cofactor is Mg(2+).

The catalysed reaction is N-(5-phospho-beta-D-ribosyl)anthranilate + diphosphate = 5-phospho-alpha-D-ribose 1-diphosphate + anthranilate. Its pathway is amino-acid biosynthesis; L-tryptophan biosynthesis; L-tryptophan from chorismate: step 2/5. Functionally, catalyzes the transfer of the phosphoribosyl group of 5-phosphorylribose-1-pyrophosphate (PRPP) to anthranilate to yield N-(5'-phosphoribosyl)-anthranilate (PRA). This Bacillus thuringiensis subsp. konkukian (strain 97-27) protein is Anthranilate phosphoribosyltransferase.